The following is a 121-amino-acid chain: NAD(P)H-quinone oxidoreductase subunit M (121 aa).

It belongs to the complex I NdhM subunit family. As to quaternary structure, NDH-1 can be composed of about 15 different subunits; different subcomplexes with different compositions have been identified which probably have different functions.

It is found in the cellular thylakoid membrane. The catalysed reaction is a plastoquinone + NADH + (n+1) H(+)(in) = a plastoquinol + NAD(+) + n H(+)(out). The enzyme catalyses a plastoquinone + NADPH + (n+1) H(+)(in) = a plastoquinol + NADP(+) + n H(+)(out). Its function is as follows. NDH-1 shuttles electrons from an unknown electron donor, via FMN and iron-sulfur (Fe-S) centers, to quinones in the respiratory and/or the photosynthetic chain. The immediate electron acceptor for the enzyme in this species is believed to be plastoquinone. Couples the redox reaction to proton translocation, and thus conserves the redox energy in a proton gradient. Cyanobacterial NDH-1 also plays a role in inorganic carbon-concentration. This Synechococcus sp. (strain JA-3-3Ab) (Cyanobacteria bacterium Yellowstone A-Prime) protein is NAD(P)H-quinone oxidoreductase subunit M.